A 147-amino-acid polypeptide reads, in one-letter code: Ribosome-binding factor A (147 aa).

Positions 126 to 147 (LKKNAQPAGDAHPYKDDDAMND) are disordered. Residues 137–147 (HPYKDDDAMND) are compositionally biased toward basic and acidic residues.

Belongs to the RbfA family. Monomer. Binds 30S ribosomal subunits, but not 50S ribosomal subunits or 70S ribosomes.

It is found in the cytoplasm. In terms of biological role, one of several proteins that assist in the late maturation steps of the functional core of the 30S ribosomal subunit. Associates with free 30S ribosomal subunits (but not with 30S subunits that are part of 70S ribosomes or polysomes). Required for efficient processing of 16S rRNA. May interact with the 5'-terminal helix region of 16S rRNA. This Corynebacterium diphtheriae (strain ATCC 700971 / NCTC 13129 / Biotype gravis) protein is Ribosome-binding factor A.